A 49-amino-acid polypeptide reads, in one-letter code: Large ribosomal subunit protein eL40 (49 aa).

It belongs to the eukaryotic ribosomal protein eL40 family.

The protein is Large ribosomal subunit protein eL40 of Halorubrum lacusprofundi (strain ATCC 49239 / DSM 5036 / JCM 8891 / ACAM 34).